Consider the following 142-residue polypeptide: Large ribosomal subunit protein uL13 (142 aa).

This sequence belongs to the universal ribosomal protein uL13 family. In terms of assembly, part of the 50S ribosomal subunit.

Functionally, this protein is one of the early assembly proteins of the 50S ribosomal subunit, although it is not seen to bind rRNA by itself. It is important during the early stages of 50S assembly. The chain is Large ribosomal subunit protein uL13 from Pseudomonas aeruginosa (strain LESB58).